The primary structure comprises 241 residues: Adenosine 5'-phosphosulfate reductase (241 aa).

[4Fe-4S] cluster is bound by residues cysteine 122, cysteine 123, cysteine 205, and cysteine 208. Catalysis depends on cysteine 231, which acts as the Nucleophile; cysteine thiosulfonate intermediate.

Belongs to the PAPS reductase family. CysH subfamily. [4Fe-4S] cluster serves as cofactor.

The protein localises to the cytoplasm. The enzyme catalyses [thioredoxin]-disulfide + sulfite + AMP + 2 H(+) = adenosine 5'-phosphosulfate + [thioredoxin]-dithiol. It functions in the pathway sulfur metabolism; hydrogen sulfide biosynthesis; sulfite from sulfate. Its function is as follows. Catalyzes the formation of sulfite from adenosine 5'-phosphosulfate (APS) using thioredoxin as an electron donor. The protein is Adenosine 5'-phosphosulfate reductase of Shouchella clausii (strain KSM-K16) (Alkalihalobacillus clausii).